The following is a 206-amino-acid chain: 2,3-bisphosphoglycerate-dependent phosphoglycerate mutase (206 aa).

Substrate contacts are provided by residues 9-16, 22-23, Arg-61, 88-91, Lys-99, 115-116, and 159-160; these read RHGQSEWN, TG, ERDY, RR, and GN. The active-site Tele-phosphohistidine intermediate is the His-10. Catalysis depends on Glu-88, which acts as the Proton donor/acceptor.

Belongs to the phosphoglycerate mutase family. BPG-dependent PGAM subfamily. Homodimer.

It carries out the reaction (2R)-2-phosphoglycerate = (2R)-3-phosphoglycerate. The protein operates within carbohydrate degradation; glycolysis; pyruvate from D-glyceraldehyde 3-phosphate: step 3/5. Catalyzes the interconversion of 2-phosphoglycerate and 3-phosphoglycerate. This chain is 2,3-bisphosphoglycerate-dependent phosphoglycerate mutase, found in Mesorhizobium japonicum (strain LMG 29417 / CECT 9101 / MAFF 303099) (Mesorhizobium loti (strain MAFF 303099)).